Here is a 142-residue protein sequence, read N- to C-terminus: Large ribosomal subunit protein uL22c (142 aa).

The protein belongs to the universal ribosomal protein uL22 family. Part of the 50S ribosomal subunit.

The protein resides in the plastid. The protein localises to the chloroplast. Functionally, this protein binds specifically to 23S rRNA. Its function is as follows. The globular domain of the protein is located near the polypeptide exit tunnel on the outside of the subunit, while an extended beta-hairpin is found that lines the wall of the exit tunnel in the center of the 70S ribosome. This is Large ribosomal subunit protein uL22c (rpl22) from Carica papaya (Papaya).